We begin with the raw amino-acid sequence, 577 residues long: Pentatricopeptide repeat-containing protein At1g63400 (577 aa).

PPR repeat units follow at residues 49 to 83 (GSGDYREILRNGLHSMKLDDAIGLFGGMVKSRPLP), 84 to 118 (SIFEFNKLLSAIAKMKKFDLVISLGEKMQRLGISH), 119 to 153 (NLYTYNILINCFCRRSQISLALALLGKMMKLGYEP), 154 to 188 (SIVTLSSLLNGYCHGKRISDAVALVDQMVEMGYRP), 189 to 223 (DTITFTTLIHGLFLHNKASEAVALVDRMVQRGCQP), 224 to 258 (NLVTYGVVVNGLCKRGDIDLAFNLLNKMEAAKIEA), 259 to 293 (NVVIYSTVIDSLCKYRHEDDALNLFTEMENKGVRP), 294 to 328 (NVITYSSLISCLCNYERWSDASRLLSDMIERKINP), 329 to 363 (NVVTFNALIDAFVKEGKLVEAEKLYDEMIKRSIDP), 364 to 398 (DIFTYSSLINGFCMHDRLDEAKHMFELMISKDCFP), 399 to 433 (NVVTYNTLINGFCKAKRIDEGVELFREMSQRGLVG), 434 to 468 (NTVTYTTLIHGFFQARDCDNAQMVFKQMVSDGVHP), 469 to 503 (NIMTYNTLLDGLCKNGKLEKAMVVFEYLQRSKMEP), 504 to 538 (TIYTYNIMIEGMCKAGKVEDGWDLFCSLSLKGVKP), and 539 to 573 (DVIIYNTMISGFCRKGLKEEADALFRKMREDGPLP).

The protein belongs to the PPR family. P subfamily.

This Arabidopsis thaliana (Mouse-ear cress) protein is Pentatricopeptide repeat-containing protein At1g63400.